A 246-amino-acid chain; its full sequence is Ribosomal RNA small subunit methyltransferase J (246 aa).

S-adenosyl-L-methionine-binding positions include 115–116 (ER) and Asp169.

The protein belongs to the methyltransferase superfamily. RsmJ family.

It localises to the cytoplasm. It catalyses the reaction guanosine(1516) in 16S rRNA + S-adenosyl-L-methionine = N(2)-methylguanosine(1516) in 16S rRNA + S-adenosyl-L-homocysteine + H(+). Its function is as follows. Specifically methylates the guanosine in position 1516 of 16S rRNA. The sequence is that of Ribosomal RNA small subunit methyltransferase J from Buchnera aphidicola subsp. Acyrthosiphon pisum (strain APS) (Acyrthosiphon pisum symbiotic bacterium).